The following is a 314-amino-acid chain: Homoserine kinase (314 aa).

ATP is bound at residue 96–106; the sequence is PIGSGLGSSAC.

The protein belongs to the GHMP kinase family. Homoserine kinase subfamily.

The protein localises to the cytoplasm. It catalyses the reaction L-homoserine + ATP = O-phospho-L-homoserine + ADP + H(+). It functions in the pathway amino-acid biosynthesis; L-threonine biosynthesis; L-threonine from L-aspartate: step 4/5. Functionally, catalyzes the ATP-dependent phosphorylation of L-homoserine to L-homoserine phosphate. This is Homoserine kinase from Histophilus somni (strain 129Pt) (Haemophilus somnus).